The following is a 321-amino-acid chain: 4-hydroxy-2-oxoglutarate aldolase, mitochondrial (321 aa).

The N-terminal 23 residues, 1 to 23, are a transit peptide targeting the mitochondrion; sequence MLGPQIWASMRQGLSRGLSRNVK. 71 to 72 provides a ligand contact to substrate; sequence ST. K190 serves as the catalytic Schiff-base intermediate with substrate. Positions 192 and 216 each coordinate substrate.

Belongs to the DapA family. Homotetramer.

Its subcellular location is the mitochondrion. It carries out the reaction (4S)-4-hydroxy-2-oxoglutarate = glyoxylate + pyruvate. The enzyme catalyses (4R)-4-hydroxy-2-oxoglutarate = glyoxylate + pyruvate. Inhibited by divalent cations. Its function is as follows. Catalyzes the final step in the metabolic pathway of hydroxyproline. This is 4-hydroxy-2-oxoglutarate aldolase, mitochondrial (Hoga1) from Mus musculus (Mouse).